Consider the following 354-residue polypeptide: Sulfate permease CysP (354 aa).

A run of 8 helical transmembrane segments spans residues 3–23 (LAAI…GAAA), 40–60 (ALIL…GEVV), 77–97 (IVCI…LLGI), 125–145 (LIIV…TYFV), 164–184 (ILGI…GMNN), 197–217 (VLDV…GALL), 293–313 (VWIV…SLFL), and 320–340 (IFIM…TKAI).

This sequence belongs to the inorganic phosphate transporter (PiT) (TC 2.A.20) family.

It localises to the cell membrane. Its function is as follows. Involved in the import of sulfate. In Bacillus subtilis (strain 168), this protein is Sulfate permease CysP (cysP).